The following is a 181-amino-acid chain: Adenylate kinase (181 aa).

10-15 lines the ATP pocket; sequence GAGKGT. Residues 30 to 59 are NMP; the sequence is STGELFRSNIENGTKLGLEAKRYLDAGDLV. Residues T31, R36, 57 to 59, 85 to 88, and Q92 contribute to the AMP site; these read DLV and GFPR. An LID region spans residues 126-132; the sequence is ARGRADD. R127 contributes to the ATP binding site. Positions 129 and 140 each coordinate AMP. ATP is bound at residue G166.

It belongs to the adenylate kinase family. Monomer.

The protein resides in the cytoplasm. The catalysed reaction is AMP + ATP = 2 ADP. It participates in purine metabolism; AMP biosynthesis via salvage pathway; AMP from ADP: step 1/1. In terms of biological role, catalyzes the reversible transfer of the terminal phosphate group between ATP and AMP. Plays an important role in cellular energy homeostasis and in adenine nucleotide metabolism. The chain is Adenylate kinase from Mycolicibacterium paratuberculosis (strain ATCC BAA-968 / K-10) (Mycobacterium paratuberculosis).